We begin with the raw amino-acid sequence, 209 residues long: Pyridoxine/pyridoxamine 5'-phosphate oxidase (209 aa).

Residues 7-10 (REDY) and Lys-64 contribute to the substrate site. FMN contacts are provided by residues 59–64 (RIVLLK), 74–75 (FT), Arg-80, and Lys-81. Substrate-binding residues include Tyr-121, Arg-125, and Ser-129. FMN contacts are provided by residues 138 to 139 (QS) and Trp-182. 188–190 (RLH) contributes to the substrate binding site. Arg-192 lines the FMN pocket.

The protein belongs to the pyridoxamine 5'-phosphate oxidase family. In terms of assembly, homodimer. FMN is required as a cofactor.

The enzyme catalyses pyridoxamine 5'-phosphate + O2 + H2O = pyridoxal 5'-phosphate + H2O2 + NH4(+). It carries out the reaction pyridoxine 5'-phosphate + O2 = pyridoxal 5'-phosphate + H2O2. It participates in cofactor metabolism; pyridoxal 5'-phosphate salvage; pyridoxal 5'-phosphate from pyridoxamine 5'-phosphate: step 1/1. The protein operates within cofactor metabolism; pyridoxal 5'-phosphate salvage; pyridoxal 5'-phosphate from pyridoxine 5'-phosphate: step 1/1. Its function is as follows. Catalyzes the oxidation of either pyridoxine 5'-phosphate (PNP) or pyridoxamine 5'-phosphate (PMP) into pyridoxal 5'-phosphate (PLP). The protein is Pyridoxine/pyridoxamine 5'-phosphate oxidase of Actinobacillus pleuropneumoniae serotype 3 (strain JL03).